The sequence spans 740 residues: Catalase-peroxidase (740 aa).

Positions 1–32 (MPEDRPIEDSPPIGEAQTDAPAGGCPAGFGRI) are disordered. The tryptophyl-tyrosyl-methioninium (Trp-Tyr) (with M-263) cross-link spans 113-237 (WHAAGTYRVS…LAAVQMGLIY (125 aa)). His-114 (proton acceptor) is an active-site residue. A cross-link (tryptophyl-tyrosyl-methioninium (Tyr-Met) (with W-113)) is located at residues 237–263 (YVNPEGPNGNPDPQASAIDIRETFGRM). His-278 is a binding site for heme b.

The protein belongs to the peroxidase family. Peroxidase/catalase subfamily. In terms of assembly, homodimer or homotetramer. Heme b serves as cofactor. In terms of processing, formation of the three residue Trp-Tyr-Met cross-link is important for the catalase, but not the peroxidase activity of the enzyme.

The catalysed reaction is H2O2 + AH2 = A + 2 H2O. It catalyses the reaction 2 H2O2 = O2 + 2 H2O. In terms of biological role, bifunctional enzyme with both catalase and broad-spectrum peroxidase activity. May play a role in the intracellular survival of mycobacteria. This Mycolicibacterium smegmatis (Mycobacterium smegmatis) protein is Catalase-peroxidase.